Here is a 196-residue protein sequence, read N- to C-terminus: UMP-CMP kinase (196 aa).

13 to 18 (GAGKGT) contributes to the ATP binding site. The tract at residues 33–63 (SAGDLLRDERKKPDSQYGELIESYIRDGRIV) is NMP. A ribonucleoside 5'-phosphate contacts are provided by residues arginine 39, 61 to 63 (RIV), and 93 to 96 (GFPR). Asparagine 100 serves as a coordination point for CMP. Residues 133-143 (ERGKSSGRSDD) are LID. Residue arginine 134 participates in ATP binding. The a ribonucleoside 5'-phosphate site is built by arginine 140 and arginine 151. Lysine 179 provides a ligand contact to ATP.

It belongs to the adenylate kinase family. UMP-CMP kinase subfamily. Monomer. It depends on Mg(2+) as a cofactor.

It localises to the cytoplasm. The protein localises to the nucleus. It catalyses the reaction CMP + ATP = CDP + ADP. It carries out the reaction dCMP + ATP = dCDP + ADP. The enzyme catalyses UMP + ATP = UDP + ADP. The catalysed reaction is a 2'-deoxyribonucleoside 5'-diphosphate + ATP = a 2'-deoxyribonucleoside 5'-triphosphate + ADP. It catalyses the reaction a ribonucleoside 5'-diphosphate + ATP = a ribonucleoside 5'-triphosphate + ADP. Its function is as follows. Catalyzes the phosphorylation of pyrimidine nucleoside monophosphates at the expense of ATP. Plays an important role in de novo pyrimidine nucleotide biosynthesis. Has preference for UMP and CMP as phosphate acceptors. Also displays broad nucleoside diphosphate kinase activity. The protein is UMP-CMP kinase (cmpk1) of Xenopus tropicalis (Western clawed frog).